The primary structure comprises 260 residues: Indole-3-glycerol phosphate synthase (260 aa).

The protein belongs to the TrpC family.

The catalysed reaction is 1-(2-carboxyphenylamino)-1-deoxy-D-ribulose 5-phosphate + H(+) = (1S,2R)-1-C-(indol-3-yl)glycerol 3-phosphate + CO2 + H2O. It functions in the pathway amino-acid biosynthesis; L-tryptophan biosynthesis; L-tryptophan from chorismate: step 4/5. The protein is Indole-3-glycerol phosphate synthase of Staphylococcus aureus (strain bovine RF122 / ET3-1).